The sequence spans 652 residues: Anaphase-promoting complex subunit 4 (652 aa).

The APC/C is composed of at least 13 subunits that stay tightly associated throughout the cell cycle: APC1, APC2, APC4, APC5, APC9, APC11, CDC16, CDC23, CDC26, CDC27, DOC1, MND2 and SWM1.

The protein localises to the cytoplasm. Its subcellular location is the nucleus. Its pathway is protein modification; protein ubiquitination. Its function is as follows. Component of the anaphase promoting complex/cyclosome (APC/C), a cell cycle-regulated E3 ubiquitin-protein ligase complex that controls progression through mitosis and the G1 phase of the cell cycle. The APC/C is thought to confer substrate specificity and, in the presence of ubiquitin-conjugating E2 enzymes, it catalyzes the formation of protein-ubiquitin conjugates that are subsequently degraded by the 26S proteasome. In early mitosis, the APC/C is activated by CDC20 and targets securin PDS1, the B-type cyclin CLB5, and other anaphase inhibitory proteins for proteolysis, thereby triggering the separation of sister chromatids at the metaphase-to-anaphase transition. In late mitosis and in G1, degradation of CLB5 allows activation of the APC/C by CDH1, which is needed to destroy CDC20 and the B-type cyclin CLB2 to allow exit from mitosis and creating the low CDK state necessary for cytokinesis and for reforming prereplicative complexes in G1 prior to another round of replication. In Saccharomyces cerevisiae (strain ATCC 204508 / S288c) (Baker's yeast), this protein is Anaphase-promoting complex subunit 4 (APC4).